A 259-amino-acid polypeptide reads, in one-letter code: Acetylglutamate kinase (259 aa).

Substrate-binding positions include glycine 45–glycine 46, arginine 67, and asparagine 159.

It belongs to the acetylglutamate kinase family. ArgB subfamily.

The protein localises to the cytoplasm. The enzyme catalyses N-acetyl-L-glutamate + ATP = N-acetyl-L-glutamyl 5-phosphate + ADP. Its pathway is amino-acid biosynthesis; L-arginine biosynthesis; N(2)-acetyl-L-ornithine from L-glutamate: step 2/4. Catalyzes the ATP-dependent phosphorylation of N-acetyl-L-glutamate. This is Acetylglutamate kinase from Aeromonas salmonicida (strain A449).